The sequence spans 371 residues: Loganic acid O-methyltransferase (371 aa).

Tyrosine 31 lines the S-adenosyl-L-homocysteine pocket. Residues tyrosine 37 and glutamine 38 each contribute to the loganate site. Residues cysteine 78, asparagine 83, aspartate 114, histidine 115, serine 141, and phenylalanine 142 each contribute to the S-adenosyl-L-homocysteine site. The loganate site is built by histidine 162 and tryptophan 163. Residue asparagine 180 coordinates Mg(2+). 2 residues coordinate loganate: alanine 241 and histidine 245. Mg(2+) contacts are provided by aspartate 267, phenylalanine 269, and asparagine 270. 2 residues coordinate loganate: glutamine 273 and glutamine 316.

Belongs to the methyltransferase superfamily. Type-7 methyltransferase family. Homodimer. Mg(2+) serves as cofactor. As to expression, expressed in leaves (especially in leaf epidermis), flowers, siliques and stems, and, at low levels, in hairy roots.

The catalysed reaction is loganate + S-adenosyl-L-methionine = loganin + S-adenosyl-L-homocysteine. The protein operates within alkaloid biosynthesis. Its activity is regulated as follows. Strongly repressed by loganin and slightly by S-adenosyl-L-homocysteine. In terms of biological role, component of the seco-iridoid and derivatives monoterpenoid indole alkaloids (MIAs, e.g. vinblastine and ajmalicine) biosynthesis pathway. Catalyzes the methylation of loganic acid (6S,7R) to produce loganin. Weak activity with secologanic acid as substrate. Inactive on deoxyloganic, dehydrologanic, epiloganic and loganetic acid. The polypeptide is Loganic acid O-methyltransferase (Catharanthus roseus (Madagascar periwinkle)).